Here is a 210-residue protein sequence, read N- to C-terminus: Large ribosomal subunit protein mL57 (210 aa).

Residues 1 to 59 (MLTRHCNRLGLQIENKFVFRSSSWNCVRRIGKIACNENKYRYEMTSTEEDIDSFFSRVF) constitute a mitochondrion transit peptide.

This sequence belongs to the ribonuclease III family. Mitochondrion-specific ribosomal protein mL57 subfamily. As to quaternary structure, component of the mitochondrial large ribosomal subunit (mt-LSU). Mature yeast 74S mitochondrial ribosomes consist of a small (37S) and a large (54S) subunit. The 37S small subunit contains a 15S ribosomal RNA (15S mt-rRNA) and at least 32 different proteins. The 54S large subunit contains a 21S rRNA (21S mt-rRNA) and at least 45 different proteins. mL57 forms a heterodimer with mL44 and stabilizes rRNA expansion segments 1/2 at a membrane-facing protuberance close to the point of attachment of the ribosome to the translocon in the membrane.

The protein localises to the mitochondrion. In terms of biological role, component of the mitochondrial ribosome (mitoribosome), a dedicated translation machinery responsible for the synthesis of mitochondrial genome-encoded proteins, including at least some of the essential transmembrane subunits of the mitochondrial respiratory chain. The mitoribosomes are attached to the mitochondrial inner membrane and translation products are cotranslationally integrated into the membrane. The polypeptide is Large ribosomal subunit protein mL57 (mrp15) (Schizosaccharomyces pombe (strain 972 / ATCC 24843) (Fission yeast)).